The chain runs to 224 residues: UPF0173 metal-dependent hydrolase EF_1371 (224 aa).

The protein belongs to the UPF0173 family.

This chain is UPF0173 metal-dependent hydrolase EF_1371, found in Enterococcus faecalis (strain ATCC 700802 / V583).